The following is a 257-amino-acid chain: Ribosomal RNA small subunit methyltransferase J (257 aa).

S-adenosyl-L-methionine contacts are provided by residues 107-108, 123-124, and aspartate 177; these read RD and ER.

It belongs to the methyltransferase superfamily. RsmJ family.

The protein localises to the cytoplasm. It carries out the reaction guanosine(1516) in 16S rRNA + S-adenosyl-L-methionine = N(2)-methylguanosine(1516) in 16S rRNA + S-adenosyl-L-homocysteine + H(+). Its function is as follows. Specifically methylates the guanosine in position 1516 of 16S rRNA. This Haemophilus influenzae (strain ATCC 51907 / DSM 11121 / KW20 / Rd) protein is Ribosomal RNA small subunit methyltransferase J.